A 150-amino-acid chain; its full sequence is Copper transporter 3 (150 aa).

2 helical membrane-spanning segments follow: residues 50–70 (GGMY…LEFL) and 100–120 (LAYL…LAAV).

Belongs to the copper transporter (Ctr) (TC 1.A.56) family. SLC31A subfamily.

The protein resides in the membrane. Its function is as follows. Involved in the transport of copper. In Oryza sativa subsp. japonica (Rice), this protein is Copper transporter 3 (COPT3).